We begin with the raw amino-acid sequence, 424 residues long: L-threonine:uridine-5'-aldehyde transaldolase (424 aa).

Lysine 235 is subject to N6-(pyridoxal phosphate)lysine.

It belongs to the SHMT family. It depends on pyridoxal 5'-phosphate as a cofactor.

The enzyme catalyses uridine-5'-aldehyde + L-threonine = (5'S,6'S)-C-glycyluridine + acetaldehyde. It participates in antibiotic biosynthesis. Its function is as follows. Transaldolase involved in the biosynthesis of the lipopeptidyl nucleoside antibiotic A-90289. Catalyzes the condensation of L-threonine and uridine-5'-aldehyde to form 5'-C-glycyluridine (GlyU). Forms (5'S,6'S)-GlyU. Has no activity with alternative amino acids, such as glycine or serine. This is L-threonine:uridine-5'-aldehyde transaldolase from Streptomyces sp.